Reading from the N-terminus, the 313-residue chain is Ribosomal protein L11 methyltransferase (313 aa).

S-adenosyl-L-methionine contacts are provided by threonine 151, glycine 172, aspartate 194, and asparagine 245.

Belongs to the methyltransferase superfamily. PrmA family.

Its subcellular location is the cytoplasm. The enzyme catalyses L-lysyl-[protein] + 3 S-adenosyl-L-methionine = N(6),N(6),N(6)-trimethyl-L-lysyl-[protein] + 3 S-adenosyl-L-homocysteine + 3 H(+). In terms of biological role, methylates ribosomal protein L11. In Nitrosomonas europaea (strain ATCC 19718 / CIP 103999 / KCTC 2705 / NBRC 14298), this protein is Ribosomal protein L11 methyltransferase.